The sequence spans 175 residues: Ribosome maturation factor RimM (175 aa).

The PRC barrel domain occupies S94–L166.

The protein belongs to the RimM family. As to quaternary structure, binds ribosomal protein uS19.

Its subcellular location is the cytoplasm. Its function is as follows. An accessory protein needed during the final step in the assembly of 30S ribosomal subunit, possibly for assembly of the head region. Essential for efficient processing of 16S rRNA. May be needed both before and after RbfA during the maturation of 16S rRNA. It has affinity for free ribosomal 30S subunits but not for 70S ribosomes. In Renibacterium salmoninarum (strain ATCC 33209 / DSM 20767 / JCM 11484 / NBRC 15589 / NCIMB 2235), this protein is Ribosome maturation factor RimM.